The following is a 138-amino-acid chain: Large ribosomal subunit protein uL16 (138 aa).

It belongs to the universal ribosomal protein uL16 family. Part of the 50S ribosomal subunit.

In terms of biological role, binds 23S rRNA and is also seen to make contacts with the A and possibly P site tRNAs. In Nitrosomonas europaea (strain ATCC 19718 / CIP 103999 / KCTC 2705 / NBRC 14298), this protein is Large ribosomal subunit protein uL16.